Reading from the N-terminus, the 128-residue chain is Infection structure-specific protein 56 (128 aa).

Composition is skewed to polar residues over residues 27-36 (HATYPQSQPH) and 87-101 (TSIS…DSQS). 2 disordered regions span residues 27–48 (HATY…AVPS) and 86–128 (GTSI…STSA). Basic and acidic residues predominate over residues 115–128 (KDAKKELKDPSTSA).

Functionally, general role in the development of germlings including formation of the infection structures. The protein is Infection structure-specific protein 56 (INF56) of Uromyces appendiculatus (Rust fungus).